The sequence spans 607 residues: Polypeptide N-acetylgalactosaminyltransferase 18 (607 aa).

At 1–12 (MVCTRKTKTLVS) the chain is on the cytoplasmic side. A helical; Signal-anchor for type II membrane protein transmembrane segment spans residues 13–35 (TCVILSGMTNIICLLYVGWVTNY). The Lumenal portion of the chain corresponds to 36–607 (IASVYVRGQE…ITNVLRSLAS (572 aa)). Cystine bridges form between Cys144–Cys377, Cys368–Cys447, Cys482–Cys498, Cys530–Cys543, and Cys571–Cys591. Asn146 carries an N-linked (GlcNAc...) asparagine glycan. The segment at 153–267 (LPEVSIVFIF…VGWAEPVLTR (115 aa)) is catalytic subdomain A. Substrate is bound at residue Asp194. Residue Asn195 is glycosylated (N-linked (GlcNAc...) asparagine). Mn(2+) is bound by residues Asp251 and His253. Asn320 carries an N-linked (GlcNAc...) asparagine glycan. Residues 324 to 385 (PIRSPALIGC…PCSRIAHIER (62 aa)) form a catalytic subdomain B region. Residue His382 participates in Mn(2+) binding. Arg385 and Tyr390 together coordinate substrate. In terms of domain architecture, Ricin B-type lectin spans 469–599 (AYGVLQNSLK…KCSGQHWSIT (131 aa)).

Belongs to the glycosyltransferase 2 family. GalNAc-T subfamily. The cofactor is Mn(2+).

The protein resides in the golgi apparatus membrane. It carries out the reaction L-seryl-[protein] + UDP-N-acetyl-alpha-D-galactosamine = a 3-O-[N-acetyl-alpha-D-galactosaminyl]-L-seryl-[protein] + UDP + H(+). The enzyme catalyses L-threonyl-[protein] + UDP-N-acetyl-alpha-D-galactosamine = a 3-O-[N-acetyl-alpha-D-galactosaminyl]-L-threonyl-[protein] + UDP + H(+). It functions in the pathway protein modification; protein glycosylation. Functionally, catalyzes the initial reaction in O-linked oligosaccharide biosynthesis, the transfer of an N-acetyl-D-galactosamine (GalNAc) residue from UDP-GalNAc to a serine or threonine residue on the protein receptor. In Homo sapiens (Human), this protein is Polypeptide N-acetylgalactosaminyltransferase 18 (GALNT18).